The primary structure comprises 373 residues: Anhydro-N-acetylmuramic acid kinase (373 aa).

12 to 19 (GTSLDGVD) lines the ATP pocket.

Belongs to the anhydro-N-acetylmuramic acid kinase family.

The enzyme catalyses 1,6-anhydro-N-acetyl-beta-muramate + ATP + H2O = N-acetyl-D-muramate 6-phosphate + ADP + H(+). Its pathway is amino-sugar metabolism; 1,6-anhydro-N-acetylmuramate degradation. It participates in cell wall biogenesis; peptidoglycan recycling. Catalyzes the specific phosphorylation of 1,6-anhydro-N-acetylmuramic acid (anhMurNAc) with the simultaneous cleavage of the 1,6-anhydro ring, generating MurNAc-6-P. Is required for the utilization of anhMurNAc either imported from the medium or derived from its own cell wall murein, and thus plays a role in cell wall recycling. The chain is Anhydro-N-acetylmuramic acid kinase from Serratia proteamaculans (strain 568).